The chain runs to 143 residues: Large ribosomal subunit protein uL11 (143 aa).

It belongs to the universal ribosomal protein uL11 family. In terms of assembly, part of the ribosomal stalk of the 50S ribosomal subunit. Interacts with L10 and the large rRNA to form the base of the stalk. L10 forms an elongated spine to which L12 dimers bind in a sequential fashion forming a multimeric L10(L12)X complex. Post-translationally, one or more lysine residues are methylated.

Forms part of the ribosomal stalk which helps the ribosome interact with GTP-bound translation factors. The polypeptide is Large ribosomal subunit protein uL11 (Delftia acidovorans (strain DSM 14801 / SPH-1)).